Reading from the N-terminus, the 195-residue chain is Holliday junction branch migration complex subunit RuvA (195 aa).

The domain I stretch occupies residues 1-64 (MIGRIAGLLL…EDAHLLFGFM (64 aa)). The interval 65-140 (TEPERVLFRQ…KISPAITLPE (76 aa)) is domain II. Residues 140–144 (ETGTA) are flexible linker. Positions 145–195 (MASSTDKDILNALSALGYNDREANWAVGQLSEGVTVSDGIMQSLRLLSKAK) are domain III.

This sequence belongs to the RuvA family. In terms of assembly, homotetramer. Forms an RuvA(8)-RuvB(12)-Holliday junction (HJ) complex. HJ DNA is sandwiched between 2 RuvA tetramers; dsDNA enters through RuvA and exits via RuvB. An RuvB hexamer assembles on each DNA strand where it exits the tetramer. Each RuvB hexamer is contacted by two RuvA subunits (via domain III) on 2 adjacent RuvB subunits; this complex drives branch migration. In the full resolvosome a probable DNA-RuvA(4)-RuvB(12)-RuvC(2) complex forms which resolves the HJ.

The protein resides in the cytoplasm. Its function is as follows. The RuvA-RuvB-RuvC complex processes Holliday junction (HJ) DNA during genetic recombination and DNA repair, while the RuvA-RuvB complex plays an important role in the rescue of blocked DNA replication forks via replication fork reversal (RFR). RuvA specifically binds to HJ cruciform DNA, conferring on it an open structure. The RuvB hexamer acts as an ATP-dependent pump, pulling dsDNA into and through the RuvAB complex. HJ branch migration allows RuvC to scan DNA until it finds its consensus sequence, where it cleaves and resolves the cruciform DNA. The polypeptide is Holliday junction branch migration complex subunit RuvA (Nitrosomonas europaea (strain ATCC 19718 / CIP 103999 / KCTC 2705 / NBRC 14298)).